The sequence spans 342 residues: Phosphate acyltransferase (342 aa).

The protein belongs to the PlsX family. As to quaternary structure, homodimer. Probably interacts with PlsY.

Its subcellular location is the cytoplasm. The catalysed reaction is a fatty acyl-[ACP] + phosphate = an acyl phosphate + holo-[ACP]. It functions in the pathway lipid metabolism; phospholipid metabolism. Functionally, catalyzes the reversible formation of acyl-phosphate (acyl-PO(4)) from acyl-[acyl-carrier-protein] (acyl-ACP). This enzyme utilizes acyl-ACP as fatty acyl donor, but not acyl-CoA. The sequence is that of Phosphate acyltransferase from Shewanella amazonensis (strain ATCC BAA-1098 / SB2B).